The following is a 461-amino-acid chain: tRNA-splicing endonuclease subunit Sen2 (461 aa).

Disordered stretches follow at residues 140–176 and 190–210; these read GAEQTGDSCDTVCPNTENTELSGQSSTDTGNIATSSP and GDPASDSMVGSKEQEPADVKE. A compositionally biased stretch (polar residues) spans 144 to 176; the sequence is TGDSCDTVCPNTENTELSGQSSTDTGNIATSSP. Positions 201–210 are enriched in basic and acidic residues; sequence KEQEPADVKE. Residues Y365, H373, and K412 contribute to the active site.

This sequence belongs to the tRNA-intron endonuclease family. As to quaternary structure, tRNA splicing endonuclease is a heterotetramer composed of SEN2, SEN15, SEN34/LENG5 and SEN54.

The protein resides in the nucleus. The catalysed reaction is pretRNA = a 3'-half-tRNA molecule with a 5'-OH end + a 5'-half-tRNA molecule with a 2',3'-cyclic phosphate end + an intron with a 2',3'-cyclic phosphate and a 5'-hydroxyl terminus.. Functionally, constitutes one of the two catalytic subunit of the tRNA-splicing endonuclease complex, a complex responsible for identification and cleavage of the splice sites in pre-tRNA. It cleaves pre-tRNA at the 5'- and 3'-splice sites to release the intron. The products are an intron and two tRNA half-molecules bearing 2',3'-cyclic phosphate and 5'-OH termini. There are no conserved sequences at the splice sites, but the intron is invariably located at the same site in the gene, placing the splice sites an invariant distance from the constant structural features of the tRNA body. Probably carries the active site for 5'-splice site cleavage. The tRNA splicing endonuclease is also involved in mRNA processing via its association with pre-mRNA 3'-end processing factors, establishing a link between pre-tRNA splicing and pre-mRNA 3'-end formation, suggesting that the endonuclease subunits function in multiple RNA-processing events. This Gallus gallus (Chicken) protein is tRNA-splicing endonuclease subunit Sen2 (TSEN2).